The following is a 244-amino-acid chain: tRNA pseudouridine synthase A (244 aa).

Asp-52 serves as the catalytic Nucleophile. Tyr-111 provides a ligand contact to substrate.

It belongs to the tRNA pseudouridine synthase TruA family. As to quaternary structure, homodimer.

The catalysed reaction is uridine(38/39/40) in tRNA = pseudouridine(38/39/40) in tRNA. Functionally, formation of pseudouridine at positions 38, 39 and 40 in the anticodon stem and loop of transfer RNAs. This is tRNA pseudouridine synthase A from Thermosipho melanesiensis (strain DSM 12029 / CIP 104789 / BI429).